The sequence spans 218 residues: Adenylate kinase (218 aa).

10–15 is an ATP binding site; the sequence is GAGKGT. An NMP region spans residues 30–59; sequence STGDMLRAAIQAQTPLGLEAKKVMDDGKLV. AMP-binding positions include T31, R36, 57–59, 85–88, and Q92; these read KLV and GFPR. The LID stretch occupies residues 122–159; that stretch reads GRRVHLASGRTYHVIFNPPKKEGVDDITGEPLIQREDD. ATP-binding positions include R123 and 132-133; that span reads TY. AMP is bound by residues R156 and R167. Position 203 (G203) interacts with ATP.

It belongs to the adenylate kinase family. Monomer.

The protein resides in the cytoplasm. The enzyme catalyses AMP + ATP = 2 ADP. It functions in the pathway purine metabolism; AMP biosynthesis via salvage pathway; AMP from ADP: step 1/1. Catalyzes the reversible transfer of the terminal phosphate group between ATP and AMP. Plays an important role in cellular energy homeostasis and in adenine nucleotide metabolism. The polypeptide is Adenylate kinase (Prosthecochloris aestuarii (strain DSM 271 / SK 413)).